Here is a 312-residue protein sequence, read N- to C-terminus: HTH-type transcriptional regulator TdcA (312 aa).

An HTH lysR-type domain is found at Pro-7–Thr-64. Positions Ile-24–Asn-43 form a DNA-binding region, H-T-H motif.

Belongs to the LysR transcriptional regulatory family.

The protein operates within amino-acid degradation; L-threonine degradation via propanoate pathway [regulation]. Functionally, transcriptional activator for the tdcABCDE operon. The sequence is that of HTH-type transcriptional regulator TdcA (tdcA) from Escherichia coli O157:H7.